The following is a 418-amino-acid chain: Serine hydroxymethyltransferase (418 aa).

(6S)-5,6,7,8-tetrahydrofolate is bound by residues Leu-121 and 125–127 (GHL). Lys-230 carries the N6-(pyridoxal phosphate)lysine modification. Residue 356 to 358 (SPF) coordinates (6S)-5,6,7,8-tetrahydrofolate.

Belongs to the SHMT family. In terms of assembly, homodimer. The cofactor is pyridoxal 5'-phosphate.

The protein localises to the cytoplasm. The enzyme catalyses (6R)-5,10-methylene-5,6,7,8-tetrahydrofolate + glycine + H2O = (6S)-5,6,7,8-tetrahydrofolate + L-serine. It functions in the pathway one-carbon metabolism; tetrahydrofolate interconversion. The protein operates within amino-acid biosynthesis; glycine biosynthesis; glycine from L-serine: step 1/1. Catalyzes the reversible interconversion of serine and glycine with tetrahydrofolate (THF) serving as the one-carbon carrier. This reaction serves as the major source of one-carbon groups required for the biosynthesis of purines, thymidylate, methionine, and other important biomolecules. Also exhibits THF-independent aldolase activity toward beta-hydroxyamino acids, producing glycine and aldehydes, via a retro-aldol mechanism. The protein is Serine hydroxymethyltransferase of Shewanella sediminis (strain HAW-EB3).